Consider the following 146-residue polypeptide: UPF0178 protein LMOf2365_1475 (146 aa).

Belongs to the UPF0178 family.

The chain is UPF0178 protein LMOf2365_1475 from Listeria monocytogenes serotype 4b (strain F2365).